The primary structure comprises 164 residues: UPF0303 protein R02983 (164 aa).

It belongs to the UPF0303 family.

In Rhizobium meliloti (strain 1021) (Ensifer meliloti), this protein is UPF0303 protein R02983.